The sequence spans 479 residues: Glutamate--tRNA ligase (479 aa).

Residues 21–31 (PSPTGYLHVGG) carry the 'HIGH' region motif. Residues 248–252 (KLSKR) carry the 'KMSKS' region motif. ATP is bound at residue Lys251.

This sequence belongs to the class-I aminoacyl-tRNA synthetase family. Glutamate--tRNA ligase type 1 subfamily. As to quaternary structure, monomer.

The protein localises to the cytoplasm. It carries out the reaction tRNA(Glu) + L-glutamate + ATP = L-glutamyl-tRNA(Glu) + AMP + diphosphate. Its function is as follows. Catalyzes the attachment of glutamate to tRNA(Glu) in a two-step reaction: glutamate is first activated by ATP to form Glu-AMP and then transferred to the acceptor end of tRNA(Glu). The chain is Glutamate--tRNA ligase from Haemophilus ducreyi (strain 35000HP / ATCC 700724).